The chain runs to 231 residues: 6-phosphogluconolactonase (231 aa).

Belongs to the glucosamine/galactosamine-6-phosphate isomerase family. 6-phosphogluconolactonase subfamily.

It carries out the reaction 6-phospho-D-glucono-1,5-lactone + H2O = 6-phospho-D-gluconate + H(+). It functions in the pathway carbohydrate degradation; pentose phosphate pathway; D-ribulose 5-phosphate from D-glucose 6-phosphate (oxidative stage): step 2/3. In terms of biological role, hydrolysis of 6-phosphogluconolactone to 6-phosphogluconate. The sequence is that of 6-phosphogluconolactonase (pgl) from Neisseria meningitidis serogroup A / serotype 4A (strain DSM 15465 / Z2491).